Reading from the N-terminus, the 271-residue chain is Membrane protein insertase YidC 1 (271 aa).

The signal sequence occupies residues 1 to 20; sequence MKKKLKTFSLILLTGSLLVA. Cys-21 is lipidated: N-palmitoyl cysteine. Cys-21 is lipidated: S-diacylglycerol cysteine. The next 4 helical transmembrane spans lie at 45 to 65, 124 to 144, 163 to 183, and 201 to 221; these read IQWLSFNHSIGLGIILFTLII, YASVLPLLIQLPVLWALFQAL, PDPYYILPVLAALFTFLSTWL, and VMPFIILVTSFNFASGVVLYW.

This sequence belongs to the OXA1/ALB3/YidC family. Type 2 subfamily.

Its subcellular location is the cell membrane. In terms of biological role, required for the insertion and/or proper folding and/or complex formation of integral membrane proteins into the membrane. Involved in integration of membrane proteins that insert both dependently and independently of the Sec translocase complex, as well as at least some lipoproteins. The chain is Membrane protein insertase YidC 1 from Streptococcus agalactiae serotype III (strain NEM316).